A 419-amino-acid polypeptide reads, in one-letter code: D-galactonate dehydratase family member SEN1436 (419 aa).

Q45 and H129 together coordinate substrate. Y160 serves as the catalytic Proton donor/acceptor. D225 contacts Mg(2+). H227 acts as the Proton donor/acceptor in catalysis. Mg(2+) is bound by residues E251 and E277. Substrate-binding residues include E277, R298, H327, D331, and E354.

Belongs to the mandelate racemase/muconate lactonizing enzyme family. GalD subfamily. In terms of assembly, homotetramer. The cofactor is Mg(2+).

It carries out the reaction D-gluconate = 2-dehydro-3-deoxy-D-gluconate + H2O. Functionally, has low D-gluconate dehydratase activity (in vitro), suggesting that it has no significant role in D-gluconate degradation in vivo. Has no detectable activity with a panel of 70 other acid sugars (in vitro). The chain is D-galactonate dehydratase family member SEN1436 from Salmonella enteritidis PT4 (strain P125109).